A 93-amino-acid polypeptide reads, in one-letter code: Small ribosomal subunit protein uS19 (93 aa).

The tract at residues 73 to 93 is disordered; that stretch reads EFSPTRTFRGHVKDDRKSKRR. Positions 83–93 are enriched in basic and acidic residues; sequence HVKDDRKSKRR.

It belongs to the universal ribosomal protein uS19 family.

Its function is as follows. Protein S19 forms a complex with S13 that binds strongly to the 16S ribosomal RNA. The chain is Small ribosomal subunit protein uS19 from Streptomyces coelicolor (strain ATCC BAA-471 / A3(2) / M145).